The sequence spans 516 residues: ADP-ribosylation factor GTPase-activating protein 3 (516 aa).

Positions 10-126 (LTIFKRLRSV…IKSLASQATR (117 aa)) constitute an Arf-GAP domain. The segment at 25 to 48 (CFDCGAKNPSWASITYGVFLCIDC) adopts a C4-type zinc-finger fold. The disordered stretch occupies residues 170 to 199 (AEPSSLTSRPVETTLENNEGGQEQGPSVEG). Over residues 173-194 (SSLTSRPVETTLENNEGGQEQG) the composition is skewed to polar residues. A Phosphoserine modification is found at S231. A coiled-coil region spans residues 243 to 264 (NEIEKQAQAADKMKEQEDLAKA). Phosphoserine occurs at positions 270, 274, 331, and 370. The segment at 392–414 (KTTGYSDRPTARRKPDYEPVENT) is disordered. Phosphoserine is present on residues S428, S451, S453, S455, S457, and S458.

It is found in the cytoplasm. It localises to the golgi apparatus membrane. With respect to regulation, GAP activity stimulated by phosphatidylinositol 4,5-bisphosphate (PIP2). In terms of biological role, GTPase-activating protein (GAP) for ADP ribosylation factor 1 (ARF1). Hydrolysis of ARF1-bound GTP may lead to dissociation of coatomer from Golgi-derived membranes to allow fusion with target membranes. The polypeptide is ADP-ribosylation factor GTPase-activating protein 3 (Macaca fascicularis (Crab-eating macaque)).